Consider the following 204-residue polypeptide: Imidazoleglycerol-phosphate dehydratase (204 aa).

The protein belongs to the imidazoleglycerol-phosphate dehydratase family.

The protein resides in the cytoplasm. It catalyses the reaction D-erythro-1-(imidazol-4-yl)glycerol 3-phosphate = 3-(imidazol-4-yl)-2-oxopropyl phosphate + H2O. Its pathway is amino-acid biosynthesis; L-histidine biosynthesis; L-histidine from 5-phospho-alpha-D-ribose 1-diphosphate: step 6/9. This is Imidazoleglycerol-phosphate dehydratase from Rhodococcus opacus (strain B4).